A 509-amino-acid polypeptide reads, in one-letter code: Group 3 secretory phospholipase A2 (509 aa).

An N-terminal signal peptide occupies residues 1–19 (MGVQAGLFGMLGFLGVALG). The tract at residues 123 to 149 (ESPAGARKKRAAGQSGVPGGGHQREKR) is disordered. The segment at 150–291 (GWTMPGTLWC…SWSSRATSPT (142 aa)) is phospholipase A2-like. Ca(2+)-binding residues include tryptophan 158, glycine 160, and glycine 162. Intrachain disulfides connect cysteine 159–cysteine 181, cysteine 180–cysteine 220, cysteine 187–cysteine 213, and cysteine 211–cysteine 244. Asparagine 167 is a glycosylation site (N-linked (GlcNAc...) asparagine). Histidine 184 is a catalytic residue. Aspartate 185 provides a ligand contact to Ca(2+). Aspartate 214 is a catalytic residue. Asparagine 280 is a glycosylation site (N-linked (GlcNAc...) asparagine). The tract at residues 283–354 (WSSRATSPTP…LQGPQGGLKP (72 aa)) is disordered. Over residues 284–296 (SSRATSPTPSSRS) the composition is skewed to low complexity. Residues 302-322 (PRQKQHLRKGPPHQKGSKRPS) are compositionally biased toward basic residues. N-linked (GlcNAc...) asparagine glycosylation is found at asparagine 325, asparagine 396, and asparagine 439. The interval 458-482 (QQRRHQLQDKGTDERQPWPSEPLRG) is disordered. The span at 463 to 473 (QLQDKGTDERQ) shows a compositional bias: basic and acidic residues.

Belongs to the phospholipase A2 family. It depends on Ca(2+) as a cofactor. N-glycosylation does not affect the catalytic activity, but is required for proper secretion. A nonglycosylated form is observed in several cell types. Post-translationally, in several cell types, the N- and C-termini are cleaved off. As to expression, expressed in kidney, heart, liver, and skeletal muscle. Also present in placenta and peripheral blood leukocytes. Not detected in colon, thymus, spleen and small intestine. In lung, expressed in bronchial epithelial cells and alveolar macrophages, but scarcely detected in alveolar epithelium, arterial walls and interstitial fibroblasts (at protein level). In joints of osteoarthritis and rheumatoid arthritis, expressed in endothelial cells (at protein level). In normal heart, detected in some vessels. In myocardial tissues with acute infarction, expressed in vascular endothelial cells adjacent to cardiomyocytes and those in lesions with granulation. Expression in cardiomyocytes is scarce (at protein level). In uterus, breast and colon cancers, detected in tumor cells and neighboring microvascular endothelium, but not in normal glandular tissues (at protein level). Expressed in dermal resting mast cells (at protein level) and pulmonary mast cells. Expressed in neuronal fibers (at protein level). Highly expressed in dorsal root ganglia neurons (at protein level). Expressed in Purkinje cells in cerebellum (at protein level). In stomach is preferentially expressed in neuronal fibers and in microvascular endothelium. Sparsely expressed in normal aorta (at protein level). Highly expressed in macrophages and smooth muscle cells in aorta with atheroma.

The protein resides in the secreted. The protein localises to the cell membrane. Its subcellular location is the cytoplasm. It localises to the cytoskeleton. It is found in the microtubule organizing center. The protein resides in the centrosome. The protein localises to the centriole. Its subcellular location is the recycling endosome. It catalyses the reaction a 1,2-diacyl-sn-glycero-3-phosphocholine + H2O = a 1-acyl-sn-glycero-3-phosphocholine + a fatty acid + H(+). It carries out the reaction 1-hexadecanoyl-2-(9Z,12Z-octadecadienoyl)-sn-glycero-3-phosphocholine + H2O = (9Z,12Z)-octadecadienoate + 1-hexadecanoyl-sn-glycero-3-phosphocholine + H(+). The catalysed reaction is 1-hexadecanoyl-2-(5Z,8Z,11Z,14Z-eicosatetraenoyl)-sn-glycero-3-phosphocholine + H2O = 1-hexadecanoyl-sn-glycero-3-phosphocholine + (5Z,8Z,11Z,14Z)-eicosatetraenoate + H(+). The enzyme catalyses 1-hexadecanoyl-2-(9Z,12Z-octadecadienoyl)-sn-glycero-3-phosphoethanolamine + H2O = 1-hexadecanoyl-sn-glycero-3-phosphoethanolamine + (9Z,12Z)-octadecadienoate + H(+). It catalyses the reaction 1-hexadecanoyl-2-(5Z,8Z,11Z,14Z-eicosatetraenoyl)-sn-glycero-3-phosphoethanolamine + H2O = 1-hexadecanoyl-sn-glycero-3-phosphoethanolamine + (5Z,8Z,11Z,14Z)-eicosatetraenoate + H(+). With respect to regulation, arachidonic acid release is markedly increased by glypican, a glycosylphosphatidylinositol-anchored heparan sulfate proteoglycan. Its function is as follows. Secretory calcium-dependent phospholipase A2 that primarily targets extracellular phospholipids. Hydrolyzes the ester bond of the fatty acyl group attached at sn-2 position of phospholipids without apparent head group selectivity. Contributes to phospholipid remodeling of low-density lipoprotein (LDL) and high-density lipoprotein (HDL) particles. Hydrolyzes LDL phospholipids releasing unsaturated fatty acids that regulate macrophage differentiation toward foam cells. May act in an autocrine and paracrine manner. Secreted by immature mast cells, acts on nearby fibroblasts upstream to PTDGS to synthesize prostaglandin D2 (PGD2), which in turn promotes mast cell maturation and degranulation via PTGDR. Secreted by epididymal epithelium, acts on immature sperm cells within the duct, modulating the degree of unsaturation of the fatty acyl components of phosphatidylcholines required for acrosome assembly and sperm cell motility. Facilitates the replacement of fatty acyl chains in phosphatidylcholines in sperm membranes from omega-6 and omega-9 to omega-3 polyunsaturated fatty acids (PUFAs). Coupled to lipoxygenase pathway, may process omega-6 PUFAs to generate oxygenated lipid mediators in the male reproductive tract. At pericentrosomal preciliary compartment, negatively regulates ciliogenesis likely by regulating endocytotic recycling of ciliary membrane protein. Coupled to cyclooxygenase pathway provides arachidonate to generate prostaglandin E2 (PGE2), a potent immunomodulatory lipid in inflammation and tumorigenesis. At colonic epithelial barrier, preferentially hydrolyzes phospholipids having arachidonate and docosahexaenoate at sn-2 position, contributing to the generation of oxygenated metabolites involved in colonic stem cell homeostasis. Releases C16:0 and C18:0 lysophosphatidylcholine subclasses from neuron plasma membranes and promotes neurite outgrowth and neuron survival. The chain is Group 3 secretory phospholipase A2 from Homo sapiens (Human).